The chain runs to 330 residues: Cytosolic iron-sulfur protein assembly protein 1 (330 aa).

7 WD repeats span residues 12–53, 56–95, 105–144, 151–190, 195–236, 248–286, and 292–330; these read LYKE…DVLD, AHKK…DRTF, GHEN…EEYE, EHSQ…WECV, GHEG…EDDQ, VHKR…WKVF, and CHGV…EKAA.

Belongs to the WD repeat CIA1 family. As to quaternary structure, interacts with NAR1.

The protein localises to the cytoplasm. It localises to the nucleus. In terms of biological role, essential component of the cytosolic iron-sulfur (Fe/S) protein assembly machinery. Required for the maturation of extramitochondrial Fe/S proteins. The polypeptide is Cytosolic iron-sulfur protein assembly protein 1 (Saccharomyces cerevisiae (strain ATCC 204508 / S288c) (Baker's yeast)).